Here is a 139-residue protein sequence, read N- to C-terminus: Putative pre-16S rRNA nuclease (139 aa).

The protein belongs to the YqgF nuclease family.

It is found in the cytoplasm. Could be a nuclease involved in processing of the 5'-end of pre-16S rRNA. This Thermoanaerobacter pseudethanolicus (strain ATCC 33223 / 39E) (Clostridium thermohydrosulfuricum) protein is Putative pre-16S rRNA nuclease.